The sequence spans 292 residues: tRNA pseudouridine synthase B (292 aa).

The Nucleophile role is filled by Asp38.

Belongs to the pseudouridine synthase TruB family. Type 1 subfamily.

It carries out the reaction uridine(55) in tRNA = pseudouridine(55) in tRNA. Responsible for synthesis of pseudouridine from uracil-55 in the psi GC loop of transfer RNAs. This Streptococcus sanguinis (strain SK36) protein is tRNA pseudouridine synthase B.